The primary structure comprises 251 residues: tRNA (guanine-N(1)-)-methyltransferase (251 aa).

S-adenosyl-L-methionine contacts are provided by residues Gly-113 and 133–138 (IGDYVL).

This sequence belongs to the RNA methyltransferase TrmD family. As to quaternary structure, homodimer.

The protein resides in the cytoplasm. The enzyme catalyses guanosine(37) in tRNA + S-adenosyl-L-methionine = N(1)-methylguanosine(37) in tRNA + S-adenosyl-L-homocysteine + H(+). Functionally, specifically methylates guanosine-37 in various tRNAs. This chain is tRNA (guanine-N(1)-)-methyltransferase, found in Pectobacterium atrosepticum (strain SCRI 1043 / ATCC BAA-672) (Erwinia carotovora subsp. atroseptica).